Consider the following 192-residue polypeptide: Large ribosomal subunit protein uL5 (192 aa).

The protein belongs to the universal ribosomal protein uL5 family. Part of the 50S ribosomal subunit; part of the 5S rRNA/L5/L18/L25 subcomplex. Contacts the 5S rRNA and the P site tRNA. Forms a bridge to the 30S subunit in the 70S ribosome.

In terms of biological role, this is one of the proteins that bind and probably mediate the attachment of the 5S RNA into the large ribosomal subunit, where it forms part of the central protuberance. In the 70S ribosome it contacts protein S13 of the 30S subunit (bridge B1b), connecting the 2 subunits; this bridge is implicated in subunit movement. Contacts the P site tRNA; the 5S rRNA and some of its associated proteins might help stabilize positioning of ribosome-bound tRNAs. This chain is Large ribosomal subunit protein uL5, found in Paenarthrobacter aurescens (strain TC1).